The sequence spans 378 residues: Anhydro-N-acetylmuramic acid kinase (378 aa).

9–16 lines the ATP pocket; the sequence is GTSADGID.

This sequence belongs to the anhydro-N-acetylmuramic acid kinase family.

It carries out the reaction 1,6-anhydro-N-acetyl-beta-muramate + ATP + H2O = N-acetyl-D-muramate 6-phosphate + ADP + H(+). It functions in the pathway amino-sugar metabolism; 1,6-anhydro-N-acetylmuramate degradation. Its pathway is cell wall biogenesis; peptidoglycan recycling. Functionally, catalyzes the specific phosphorylation of 1,6-anhydro-N-acetylmuramic acid (anhMurNAc) with the simultaneous cleavage of the 1,6-anhydro ring, generating MurNAc-6-P. Is required for the utilization of anhMurNAc either imported from the medium or derived from its own cell wall murein, and thus plays a role in cell wall recycling. The chain is Anhydro-N-acetylmuramic acid kinase from Prochlorococcus marinus (strain NATL1A).